The primary structure comprises 686 residues: DNA gyrase subunit B (686 aa).

Polar residues predominate over residues 1 to 27 (MADSGNPNENNPSTDTGVNDAVSTSHG). Positions 1 to 29 (MADSGNPNENNPSTDTGVNDAVSTSHGDA) are disordered. Residues 465–579 (CEIFIVEGDS…SGHVYLSRPP (115 aa)) form the Toprim domain. Residues Glu-471, Asp-544, and Asp-546 each contribute to the Mg(2+) site.

The protein belongs to the type II topoisomerase GyrB family. In terms of assembly, heterotetramer, composed of two GyrA and two GyrB chains. In the heterotetramer, GyrA contains the active site tyrosine that forms a transient covalent intermediate with DNA, while GyrB binds cofactors and catalyzes ATP hydrolysis. It depends on Mg(2+) as a cofactor. Requires Mn(2+) as cofactor. Ca(2+) serves as cofactor.

It is found in the cytoplasm. The catalysed reaction is ATP-dependent breakage, passage and rejoining of double-stranded DNA.. Functionally, a type II topoisomerase that negatively supercoils closed circular double-stranded (ds) DNA in an ATP-dependent manner to modulate DNA topology and maintain chromosomes in an underwound state. Negative supercoiling favors strand separation, and DNA replication, transcription, recombination and repair, all of which involve strand separation. Also able to catalyze the interconversion of other topological isomers of dsDNA rings, including catenanes and knotted rings. Type II topoisomerases break and join 2 DNA strands simultaneously in an ATP-dependent manner. The sequence is that of DNA gyrase subunit B from Streptomyces coelicolor (strain ATCC BAA-471 / A3(2) / M145).